Consider the following 125-residue polypeptide: Histone H2A (125 aa).

Residues 1-18 (MSGRGKGGKARAKAKSRS) show a composition bias toward basic residues. The interval 1–21 (MSGRGKGGKARAKAKSRSSRA) is disordered. Ser2 is subject to N-acetylserine. Ser2 carries the phosphoserine modification. Gln104 bears the N5-methylglutamine mark.

It belongs to the histone H2A family. The nucleosome is a histone octamer containing two molecules each of H2A, H2B, H3 and H4 assembled in one H3-H4 heterotetramer and two H2A-H2B heterodimers. The octamer wraps approximately 147 bp of DNA.

The protein localises to the nucleus. Its subcellular location is the chromosome. Core component of nucleosome. Nucleosomes wrap and compact DNA into chromatin, limiting DNA accessibility to the cellular machineries which require DNA as a template. Histones thereby play a central role in transcription regulation, DNA repair, DNA replication and chromosomal stability. DNA accessibility is regulated via a complex set of post-translational modifications of histones, also called histone code, and nucleosome remodeling. This chain is Histone H2A, found in Asterias rubens (Common European starfish).